The sequence spans 521 residues: MANKGNKKRRQFSLEEKMKVVGAVDSGKRKGDVAKEFGITPSTLSTFLKDRTKFEEKVREASVGPQRKRMRSALYDDIDKAVFAWFQEIHAKNILVTGSVIRKKALNLANMLGYDNFQASVGWLNRFRDRHGIALKAVCREDSDRLMNGLGIDKINEWHAGEIIKLIADYSPDDIFNADETGVFFQLLPQHTLAAKGDHCRGGKKAKQRLTALFCCNASGTEKMRPLIVGRSASPHCLKNIHSLPCDYRANQWAWMTRDLFNEWLMQVDARMKRAERRILLLIDNCSAHNMLPHLERIQVGYLPSNCTAVLQPLNLGIIHTMKVLYQSHLLKQILLKLNSSEDQEEVDIKQAIDMIAAAWWSVKPSTVVKCWQKAGIVPMEFAECDTESAASEPDIAIEKLWHTVAIATCVPNEVNFQDFVTADDDLIISQDTDIIQDMVAGENTSEAGSEDEGEVSLPEQPKVTITEAISSVQKLRQFLSTCVDIPDAIFGQLNGIDEYLMKRVTQTLIDSKITDFLQTK.

The HTH psq-type domain maps to 3–54 (NKGNKKRRQFSLEEKMKVVGAVDSGKRKGDVAKEFGITPSTLSTFLKDRTKF). 2 consecutive DNA-binding regions (H-T-H motif) follow at residues 30-50 (KGDV…FLKD) and 99-130 (SVIR…FRDR). Residues 66 to 137 (QRKRMRSALY…RDRHGIALKA (72 aa)) enclose the HTH CENPB-type domain. Positions 170–372 (YSPDDIFNAD…VKPSTVVKCW (203 aa)) constitute a DDE-1 domain.

It belongs to the tigger transposable element derived protein family.

The protein localises to the nucleus. The polypeptide is Tigger transposable element-derived protein 6 (TIGD6) (Homo sapiens (Human)).